The following is a 283-amino-acid chain: Calpastatin (283 aa).

Polar residues predominate over residues Met-1–Met-15. 2 disordered regions span residues Met-1–Met-186 and Asn-212–Lys-283. A compositionally biased stretch (basic residues) spans Pro-21–Ala-30. Residue Lys-32 forms a Glycyl lysine isopeptide (Lys-Gly) (interchain with G-Cter in SUMO2) linkage. Over residues Val-46–Ser-65 the composition is skewed to basic and acidic residues. Position 50 is an N6-acetyllysine (Lys-50). Ser-87 is modified (phosphoserine). Over residues Val-107–Gly-122 the composition is skewed to low complexity. A Phosphoserine modification is found at Ser-133. Thr-135 bears the Phosphothreonine mark. Residues Ile-170 to Ser-222 form an Inhibitory domain 1 repeat. Residues Ser-222 and Ser-243 each carry the phosphoserine modification. Residues Lys-249–Glu-258 are compositionally biased toward basic and acidic residues.

The protein belongs to the protease inhibitor I27 (calpastatin) family.

Functionally, specific inhibition of calpain (calcium-dependent cysteine protease). Plays a key role in postmortem tenderization of meat and have been proposed to be involved in muscle protein degradation in living tissue. This is Calpastatin (CAST) from Chlorocebus aethiops (Green monkey).